We begin with the raw amino-acid sequence, 117 residues long: Large ribosomal subunit protein bL19 (117 aa).

This sequence belongs to the bacterial ribosomal protein bL19 family.

In terms of biological role, this protein is located at the 30S-50S ribosomal subunit interface and may play a role in the structure and function of the aminoacyl-tRNA binding site. The protein is Large ribosomal subunit protein bL19 of Exiguobacterium sibiricum (strain DSM 17290 / CCUG 55495 / CIP 109462 / JCM 13490 / 255-15).